Reading from the N-terminus, the 197-residue chain is Thymidylate kinase (197 aa).

7–14 (GIDGSGKS) serves as a coordination point for ATP.

The protein belongs to the thymidylate kinase family.

It catalyses the reaction dTMP + ATP = dTDP + ADP. Its function is as follows. Phosphorylation of dTMP to form dTDP in both de novo and salvage pathways of dTTP synthesis. The polypeptide is Thymidylate kinase (tmk) (Thermotoga maritima (strain ATCC 43589 / DSM 3109 / JCM 10099 / NBRC 100826 / MSB8)).